A 123-amino-acid polypeptide reads, in one-letter code: Thioredoxin domain-containing protein 17 (123 aa).

Residue Ala-2 is modified to N-acetylalanine. The 83-residue stretch at 41-123 (SWCPDCVQAE…NLVEMLFSED (83 aa)) folds into the Thioredoxin domain. Residues Cys-43 and Cys-46 each act as nucleophile in the active site. Cys-43 and Cys-46 are disulfide-bonded.

It belongs to the thioredoxin family. In terms of assembly, interacts with TRXR1 and DYNLL1/DNCL1. The oxidized protein is reduced by TRXR1. Ubiquitously expressed in cell lines.

The protein localises to the cytoplasm. Functionally, disulfide reductase. May participate in various redox reactions through the reversible oxidation of its active center dithiol to a disulfide and catalyze dithiol-disulfide exchange reactions. Modulates TNF-alpha signaling and NF-kappa-B activation. Has peroxidase activity and may contribute to the elimination of cellular hydrogen peroxide. This is Thioredoxin domain-containing protein 17 (TXNDC17) from Homo sapiens (Human).